The sequence spans 212 residues: Ropporin-1A (212 aa).

One can recognise an RIIa domain in the interval 12–49 (PELPKMLKEFAKAAIRVQPQDLIQWAADYFEALSRGET). Residue S56 is modified to Phosphoserine. The interaction with RHPN1 stretch occupies residues 209–212 (VQLE).

This sequence belongs to the ropporin family. In terms of assembly, homodimer. Interacts with AKAP3 and RHPN1. May interact with SPA17. Interacts with FSCB; the interaction increases upon spermatozoa capacitation conditions. Interacts with CFAP61. In terms of processing, sumoylated, sumoylation decreases upon spermatozoa capacitation conditions. In terms of tissue distribution, testis specific in adult. Overexpressed in hematologic tumor cells.

It localises to the cell projection. Its subcellular location is the cilium. It is found in the flagellum. Important for male fertility. With ROPN1L, involved in fibrous sheath integrity and sperm motility, plays a role in PKA-dependent signaling processes required for spermatozoa capacitation. The polypeptide is Ropporin-1A (ROPN1) (Homo sapiens (Human)).